The chain runs to 133 residues: Small ribosomal subunit protein uS8 (133 aa).

Belongs to the universal ribosomal protein uS8 family. Part of the 30S ribosomal subunit. Contacts proteins S5 and S12.

In terms of biological role, one of the primary rRNA binding proteins, it binds directly to 16S rRNA central domain where it helps coordinate assembly of the platform of the 30S subunit. In Trichormus variabilis (strain ATCC 29413 / PCC 7937) (Anabaena variabilis), this protein is Small ribosomal subunit protein uS8.